The following is a 188-amino-acid chain: Elongation factor P (188 aa).

Residue lysine 34 is modified to N6-(3,6-diaminohexanoyl)-5-hydroxylysine.

Belongs to the elongation factor P family. May be beta-lysylated on the epsilon-amino group of Lys-34 by the combined action of EpmA and EpmB, and then hydroxylated on the C5 position of the same residue by EpmC (if this protein is present). Lysylation is critical for the stimulatory effect of EF-P on peptide-bond formation. The lysylation moiety may extend toward the peptidyltransferase center and stabilize the terminal 3-CCA end of the tRNA. Hydroxylation of the C5 position on Lys-34 may allow additional potential stabilizing hydrogen-bond interactions with the P-tRNA.

It is found in the cytoplasm. Its pathway is protein biosynthesis; polypeptide chain elongation. Its function is as follows. Involved in peptide bond synthesis. Alleviates ribosome stalling that occurs when 3 or more consecutive Pro residues or the sequence PPG is present in a protein, possibly by augmenting the peptidyl transferase activity of the ribosome. Modification of Lys-34 is required for alleviation. The sequence is that of Elongation factor P from Proteus mirabilis (strain HI4320).